We begin with the raw amino-acid sequence, 199 residues long: ATP-dependent Clp protease proteolytic subunit (199 aa).

Ser-97 (nucleophile) is an active-site residue. The active site involves His-122.

It belongs to the peptidase S14 family. In terms of assembly, fourteen ClpP subunits assemble into 2 heptameric rings which stack back to back to give a disk-like structure with a central cavity, resembling the structure of eukaryotic proteasomes.

Its subcellular location is the cytoplasm. The catalysed reaction is Hydrolysis of proteins to small peptides in the presence of ATP and magnesium. alpha-casein is the usual test substrate. In the absence of ATP, only oligopeptides shorter than five residues are hydrolyzed (such as succinyl-Leu-Tyr-|-NHMec, and Leu-Tyr-Leu-|-Tyr-Trp, in which cleavage of the -Tyr-|-Leu- and -Tyr-|-Trp bonds also occurs).. Its function is as follows. Cleaves peptides in various proteins in a process that requires ATP hydrolysis. Has a chymotrypsin-like activity. Plays a major role in the degradation of misfolded proteins. The sequence is that of ATP-dependent Clp protease proteolytic subunit from Geobacter sulfurreducens (strain ATCC 51573 / DSM 12127 / PCA).